A 456-amino-acid polypeptide reads, in one-letter code: Transcription factor bHLH62 (456 aa).

Residues 159–185 are compositionally biased toward polar residues; it reads RTNSPFPINNEPPITTNEKMPRVSSSP. Residues 159-254 form a disordered region; that stretch reads RTNSPFPINN…KTKSIDPYKD (96 aa). Positions 223 to 254 are enriched in basic and acidic residues; sequence KEIEEKEDSDPKRCKKSEENGDKTKSIDPYKD. The bHLH domain maps to 264 to 314; the sequence is QATDSHSLAERVRREKISERMKLLQDLVPGCNKVTGKALMLDEIINYVQSL.

In terms of assembly, homodimer. In terms of tissue distribution, expressed constitutively in roots, leaves, stems, and flowers.

The protein resides in the nucleus. The polypeptide is Transcription factor bHLH62 (BHLH62) (Arabidopsis thaliana (Mouse-ear cress)).